The chain runs to 244 residues: Meiotic drive suppressor wtf2 (244 aa).

A compositionally biased stretch (polar residues) spans 1–10 (MKNNYTSLKS). The segment at 1–68 (MKNNYTSLKS…RENNPSRSTD (68 aa)) is disordered. Residues 17 to 30 (ELKTDHEIDLEKGP) are compositionally biased toward basic and acidic residues. The next 4 helical transmembrane spans lie at 73–93 (FLIK…LAIC), 110–130 (WTLF…LTYF), 149–169 (WENM…VGSP), and 183–203 (LKWS…VFIA).

It belongs to the WTF family. As to quaternary structure, homomer. Interacts with other proteins that exhibit high sequence similarity.

The protein localises to the spore membrane. It localises to the vacuole membrane. Functionally, acts as a suppressor component of the dual wtf meiotic drive system, and can suppress but not confer meiotic drive by compatible poisons. Wtf meiotic drive systems promote unequal transmission of alleles from the parental zygote to progeny spores by encoding a poison and an antidote from the same locus; the poison is trans-acting and forms toxic aggregates in all spores within an ascus, wherease the antidote is spore-specific and targets aggregates for degradation by the vacuole. Meiotic drive by wtf systems therefore lead to poisoning of all progeny that do not inherit the dual poison/antidote allele, or express a compatible antidote. This Schizosaccharomyces kambucha (Fission yeast) protein is Meiotic drive suppressor wtf2.